The chain runs to 703 residues: Lactococcin-G-processing and transport ATP-binding protein LagD (703 aa).

Residues 7-132 (QQDEKDCGVA…KEWTGVLLFP (126 aa)) enclose the Peptidase C39 domain. Cys13 is an active-site residue. An ABC transmembrane type-1 domain is found at 153–435 (PILIKQKSLF…IINLQVKMQK (283 aa)). 7 helical membrane-spanning segments follow: residues 162 to 182 (FITI…DNII), 189 to 209 (TLNI…LFEY), 224 to 244 (MSIM…FFAT), 267 to 287 (ATLS…TLAI), 291 to 311 (QLFL…YVFI), 381 to 401 (MVIE…YVID), and 409 to 429 (LITY…IINL). One can recognise an ABC transporter domain in the interval 469–703 (IKLDKVSFSY…EGVYRRLLNA (235 aa)). 502-509 (GVSGSGKS) serves as a coordination point for ATP.

This sequence belongs to the ABC transporter superfamily. LagD family. In terms of assembly, homodimer.

It is found in the cell membrane. Functionally, lagD (TC 3.A.1) is involved in processing the signal peptide and probably also in export of the bacteriocin lactococcin G. In Lactococcus lactis subsp. lactis (Streptococcus lactis), this protein is Lactococcin-G-processing and transport ATP-binding protein LagD (lagD).